We begin with the raw amino-acid sequence, 428 residues long: MAKIVDIKGREVLDSRGNPTVEADVLLDNGIIGSACAPSGASTGSREALELRDGDKSRYMGKGVLKAVANINGPIRDLLLGKDPVDQKALDHAMIELDGTENKASLGANAILAVSLAAAKAAAQDQDLPLYAHIANLNGTPGVYSMPVPMMNIINGGEHADNNIDIQEFMIQPVGAKSFAEGLRWGTEIFHHLKAVLKARGLNTAVGDEGGFAPNLASNKEALDAIAEAVANAGYTLGTDVTLALDCAASEFYKNGKYKLSEEGEYSSAEFAEYLAELTRKHPIISIEDGLDESDWDGWKILTDKIGEKTQLVGDDLFVTNTKILKEGIDKKIANSILIKFNQIGTLTETLEAIQMAKAAGYTAIISHRSGETEDSTIADLAVGTSAGQIKTGSLCRSDRVSKYNQLLRIEEQLGSKAVYRGRAEFRG.

Q167 contacts (2R)-2-phosphoglycerate. The Proton donor role is filled by E209. Residues D246, E288, and D315 each coordinate Mg(2+). (2R)-2-phosphoglycerate-binding residues include K340, R369, S370, and K391. The Proton acceptor role is filled by K340.

The protein belongs to the enolase family. As to quaternary structure, component of the RNA degradosome, a multiprotein complex involved in RNA processing and mRNA degradation. Mg(2+) is required as a cofactor.

Its subcellular location is the cytoplasm. The protein localises to the secreted. It is found in the cell surface. It carries out the reaction (2R)-2-phosphoglycerate = phosphoenolpyruvate + H2O. The protein operates within carbohydrate degradation; glycolysis; pyruvate from D-glyceraldehyde 3-phosphate: step 4/5. Functionally, catalyzes the reversible conversion of 2-phosphoglycerate (2-PG) into phosphoenolpyruvate (PEP). It is essential for the degradation of carbohydrates via glycolysis. The sequence is that of Enolase 1 from Pseudomonas syringae pv. syringae (strain B728a).